Consider the following 286-residue polypeptide: Thymidylate synthase (286 aa).

140–141 contacts dUMP; sequence RR. Catalysis depends on Cys-161, which acts as the Nucleophile. Residues 185–188, Asn-196, and 226–228 each bind dUMP; these read RSND and HIY. (6R)-5,10-methylene-5,6,7,8-tetrahydrofolate is bound at residue Asp-188. Residue Ala-285 coordinates (6R)-5,10-methylene-5,6,7,8-tetrahydrofolate.

This sequence belongs to the thymidylate synthase family. Bacterial-type ThyA subfamily. In terms of assembly, homodimer.

The protein localises to the cytoplasm. It catalyses the reaction dUMP + (6R)-5,10-methylene-5,6,7,8-tetrahydrofolate = 7,8-dihydrofolate + dTMP. It functions in the pathway pyrimidine metabolism; dTTP biosynthesis. Its function is as follows. Catalyzes the reductive methylation of 2'-deoxyuridine-5'-monophosphate (dUMP) to 2'-deoxythymidine-5'-monophosphate (dTMP) while utilizing 5,10-methylenetetrahydrofolate (mTHF) as the methyl donor and reductant in the reaction, yielding dihydrofolate (DHF) as a by-product. This enzymatic reaction provides an intracellular de novo source of dTMP, an essential precursor for DNA biosynthesis. The protein is Thymidylate synthase of Streptococcus thermophilus (strain CNRZ 1066).